A 90-amino-acid chain; its full sequence is Putative membrane protein insertion efficiency factor (90 aa).

This sequence belongs to the UPF0161 family.

It localises to the cell membrane. In terms of biological role, could be involved in insertion of integral membrane proteins into the membrane. The protein is Putative membrane protein insertion efficiency factor of Lactococcus lactis subsp. cremoris (strain MG1363).